Reading from the N-terminus, the 196-residue chain is Interleukin-23 subunit alpha (196 aa).

The N-terminal stretch at 1 to 21 (MLDCRAIILLWLLPWATQGLA) is a signal peptide.

It belongs to the IL-6 superfamily. In terms of assembly, heterodimer with IL12B; disulfide-linked. The heterodimer is known as interleukin IL-23. Interacts with IL23R; this interaction enables recruitment of IL12RB1.

The protein localises to the secreted. In terms of biological role, associates with IL12B to form the pro-inflammatory cytokine IL-23 that plays different roles in innate and adaptive immunity. Released by antigen-presenting cells such as dendritic cells or macrophages, binds to a heterodimeric receptor complex composed of IL12RB1 and IL23R to activate JAK2 and TYK2 which then phosphorylate the receptor to form a docking site leading to the phosphorylation of STAT3 and STAT4. This process leads to activation of several pathways including p38 MAPK or NF-kappa-B and promotes the production of pro-inflammatory cytokines such as interleukin-17A/IL17A. In turn, participates in the early and effective intracellular bacterial clearance. Promotes the expansion and survival of T-helper 17 cells, a CD4-positive helper T-cell subset that produces IL-17, as well as other IL-17-producing cells. The chain is Interleukin-23 subunit alpha (Il23a) from Rattus norvegicus (Rat).